The primary structure comprises 380 residues: Guanine nucleotide-binding protein subunit beta (380 aa).

WD repeat units lie at residues Gly64 to Asn94, Leu106 to Asn136, Gly155 to Asp186, Gly203 to Asp234, Gly247 to Asp277, Asn296 to Asp326, and Ser342 to Ala372.

The protein belongs to the WD repeat G protein beta family. G proteins are composed of 3 units, alpha, beta and gamma. In terms of tissue distribution, present in the root, leaf and tassel.

Its function is as follows. Guanine nucleotide-binding proteins (G proteins) are involved as a modulator or transducer in various transmembrane signaling systems. The beta and gamma chains are required for the GTPase activity, for replacement of GDP by GTP, and for G protein-effector interaction. The chain is Guanine nucleotide-binding protein subunit beta (GB1) from Zea mays (Maize).